The following is a 497-amino-acid chain: Cytochrome P450 71A12 (497 aa).

The chain crosses the membrane as a helical span at residues 4–24; sequence ILMVSLCLTTLITLFLLKQFL. A heme-binding site is contributed by cysteine 439.

It belongs to the cytochrome P450 family. Heme serves as cofactor.

The protein resides in the membrane. Functionally, converts indole-3-acetaldoxime to indole cyanohydrin. Involved in the biosynthetic pathway to 4-hydroxyindole-3-carbonyl nitrile (4-OH-ICN), a cyanogenic metabolite required for inducible pathogen defense. The sequence is that of Cytochrome P450 71A12 (CYP71A12) from Arabidopsis thaliana (Mouse-ear cress).